A 342-amino-acid chain; its full sequence is Antihemorrhagic factor HSF (342 aa).

Positions 1–19 (MNSLVALVLLGQIIGSTLS) are cleaved as a signal peptide. Cystatin fetuin-A-type domains are found at residues 22–130 (VRGD…VKCH) and 141–254 (RNCS…SNCV). The Cell attachment site motif lies at 23 to 25 (RGD). An indispensable for metalloproteinase inhibition region spans residues 24-108 (GDLECDDKEA…RQQHNHAVEM (85 aa)). 6 cysteine pairs are disulfide-bonded: Cys28–Cys332, Cys85–Cys96, Cys110–Cys129, Cys143–Cys146, Cys205–Cys217, and Cys230–Cys253. Residue Asn142 is glycosylated (N-linked (GlcNAc...) asparagine). Asn204 carries an N-linked (GlcNAc...) asparagine glycan. The N-linked (GlcNAc...) asparagine glycan is linked to Asn282.

Belongs to the fetuin family. In terms of processing, cys-63 may exist in a mixed disulfide form with a thiol compound such as glutathione. Expressed by the liver.

The protein resides in the secreted. In terms of biological role, inhibits hemorrhagic and proteolytic activities of metalloproteinases (HR1A, HR1B, HR2a, HR2b and H2 proteinase from T.flavodidis and brevilysins H3, H4, H6 and L4 from A.halys brevicaudus). Has no effect on brevilysins H2. Has no effect on papain and cathepsin-B. In Protobothrops flavoviridis (Habu), this protein is Antihemorrhagic factor HSF.